A 75-amino-acid chain; its full sequence is Putative snRNP Sm-like protein (75 aa).

The 72-residue stretch at 4–75 folds into the Sm domain; the sequence is RPLDVIHRSL…NVLAISPTEE (72 aa).

This sequence belongs to the snRNP Sm proteins family.

This chain is Putative snRNP Sm-like protein, found in Pyrococcus abyssi (strain GE5 / Orsay).